The chain runs to 935 residues: Transmembrane channel-like protein 1 (935 aa).

Disordered stretches follow at residues 1 to 21 and 37 to 204; these read MPRH…DEGK and ERGK…LGSL. 5 stretches are compositionally biased toward basic and acidic residues: residues 37–47, 54–79, 109–136, 152–163, and 172–184; these read ERGKIKQASRD, RNGE…EKKH, DKSS…EKDV, NHEKTKQHLKEE, and PETT…KSES. 10 helical membrane-spanning segments follow: residues 303–340, 392–423, 480–510, 523–550, 555–589, 633–670, 690–710, 714–736, 751–774, and 818–851; these read SSVA…MGKP, RMPL…ANEE, LTRF…VRRS, WWER…ISTL, PRIA…QLKR, WETM…VRFL, VSGN…GAFY, LPAL…VMCC, NFYM…TIVS, and LVLP…KKKL. Basic and acidic residues predominate over residues 874–886; that stretch reads EQARKAGEQRRNS. The disordered stretch occupies residues 874–935; the sequence is EQARKAGEQR…QQPQKNSKKR (62 aa). Composition is skewed to polar residues over residues 899 to 919 and 926 to 935; these read SHVS…TSSG and QQPQKNSKKR.

This sequence belongs to the TMC family. As to quaternary structure, interacts specifically with isoform CD3 of PCDH15A (via cytoplasmic domain). In adults, expression is restricted to the hair cells of inner ear and lateral line organ. Expressed at higher levels in the larval lateral-line neuromasts than in the larval inner ear. Expressed in the sensory hair cell patches of the ear at 4 days post fertilization (dpf).

It is found in the cell membrane. It catalyses the reaction Ca(2+)(in) = Ca(2+)(out). In terms of biological role, pore-forming subunit of the mechanotransducer (MET) non-selective cation channel complex located at the tips of hair-cell stereocilia. Highly permeable to calcium and likely transports monovalent cations. In Danio rerio (Zebrafish), this protein is Transmembrane channel-like protein 1.